The sequence spans 366 residues: tRNA-specific 2-thiouridylase MnmA (366 aa).

ATP contacts are provided by residues 10 to 17 (GLSGGVDS) and Ile36. The Nucleophile role is filled by Cys98. Cys98 and Cys194 are disulfide-bonded. Gly122 serves as a coordination point for ATP. The interaction with tRNA stretch occupies residues 144–146 (KDQ). Residue Cys194 is the Cysteine persulfide intermediate of the active site. The tract at residues 303-304 (RY) is interaction with tRNA.

This sequence belongs to the MnmA/TRMU family.

The protein localises to the cytoplasm. It catalyses the reaction S-sulfanyl-L-cysteinyl-[protein] + uridine(34) in tRNA + AH2 + ATP = 2-thiouridine(34) in tRNA + L-cysteinyl-[protein] + A + AMP + diphosphate + H(+). Functionally, catalyzes the 2-thiolation of uridine at the wobble position (U34) of tRNA, leading to the formation of s(2)U34. The polypeptide is tRNA-specific 2-thiouridylase MnmA (Chlorobaculum tepidum (strain ATCC 49652 / DSM 12025 / NBRC 103806 / TLS) (Chlorobium tepidum)).